The primary structure comprises 436 residues: Chorismate synthase, chloroplastic (436 aa).

The disordered stretch occupies residues 1-24 (MASSSLTSKSILGSTKLGSSSLPS). Residues 1–50 (MASSSLTSKSILGSTKLGSSSLPSELRRLSSPAVQISLRTQTRKNFQIQA) constitute a chloroplast transit peptide.

It belongs to the chorismate synthase family. Homotetramer. FMNH2 is required as a cofactor.

Its subcellular location is the plastid. It is found in the chloroplast. It catalyses the reaction 5-O-(1-carboxyvinyl)-3-phosphoshikimate = chorismate + phosphate. Its pathway is metabolic intermediate biosynthesis; chorismate biosynthesis; chorismate from D-erythrose 4-phosphate and phosphoenolpyruvate: step 7/7. In terms of biological role, catalyzes the last common step of the biosynthesis of aromatic amino acids, produced via the shikimic acid pathway. The protein is Chorismate synthase, chloroplastic (EMB1144) of Arabidopsis thaliana (Mouse-ear cress).